A 224-amino-acid polypeptide reads, in one-letter code: Ribonuclease T (224 aa).

The 175-residue stretch at 32–206 (VVVDVETGGF…YDTEKTAELF (175 aa)) folds into the Exonuclease domain. Aspartate 35, glutamate 37, histidine 193, and aspartate 198 together coordinate Mg(2+). Histidine 193 serves as the catalytic Proton donor/acceptor.

Belongs to the RNase T family. Homodimer. Mg(2+) is required as a cofactor.

Functionally, trims short 3' overhangs of a variety of RNA species, leaving a one or two nucleotide 3' overhang. Responsible for the end-turnover of tRNA: specifically removes the terminal AMP residue from uncharged tRNA (tRNA-C-C-A). Also appears to be involved in tRNA biosynthesis. The protein is Ribonuclease T of Pseudomonas paraeruginosa (strain DSM 24068 / PA7) (Pseudomonas aeruginosa (strain PA7)).